A 180-amino-acid chain; its full sequence is Ribosome-recycling factor (180 aa).

This sequence belongs to the RRF family.

It is found in the cytoplasm. In terms of biological role, responsible for the release of ribosomes from messenger RNA at the termination of protein biosynthesis. May increase the efficiency of translation by recycling ribosomes from one round of translation to another. The protein is Ribosome-recycling factor of Chlamydia felis (strain Fe/C-56) (Chlamydophila felis).